The chain runs to 375 residues: MACVKFPWELMEEILYRVPSLSLSRFKTVSKEWNTLLNDKTFIKKHLALVRPQFRLWTNSKVYSVDVSLNDDPNIELRELPLDIPYVIDHRTTNFLPCNDLLFCASWWSNKAVVWNPSLRQTRLIKSGEEHFRFGGIGYDSGRPGKGYHIFGHSHSRLSVNGNTSKFIKRFYITKFESNAWKCIDDVSLGENSIGGDSLDNNNVSLNGNLYWTTNSYDTDEYLIQSFDFSKEIFKIFCVLPRKKDSSDIPVLSVFRGDRLSVLHKFKGTNNMEIWVTKNKINESVKAVVWMMFMTVSIPIYKDSKPSYFINDIYEKRLVMCCSDENGKACVYIVKDQARKKIQLGFHVSEFSHCFYDPSLIPIPSETSGQKISNS.

Residues methionine 1–histidine 46 enclose the F-box domain.

In Arabidopsis thaliana (Mouse-ear cress), this protein is Putative F-box protein At1g12190.